Here is a 611-residue protein sequence, read N- to C-terminus: U-box domain-containing protein 12 (611 aa).

The 75-residue stretch at 227–301 folds into the U-box domain; the sequence is IIPDEFRCPI…SQWCEANGIE (75 aa). 4 ARM repeats span residues 355-394, 396-435, 437-476, and 478-517; these read VNNR…NLSI, ENNK…SLSV, DENK…NLCI, and QGNK…ILAG.

It carries out the reaction S-ubiquitinyl-[E2 ubiquitin-conjugating enzyme]-L-cysteine + [acceptor protein]-L-lysine = [E2 ubiquitin-conjugating enzyme]-L-cysteine + N(6)-ubiquitinyl-[acceptor protein]-L-lysine.. It functions in the pathway protein modification; protein ubiquitination. Possesses E3 ubiquitin-protein ligase in vitro. The sequence is that of U-box domain-containing protein 12 (PUB12) from Oryza sativa subsp. japonica (Rice).